An 87-amino-acid polypeptide reads, in one-letter code: Translation initiation factor IF-1 2 (87 aa).

The region spanning 1 to 72 (MAKEELLELD…TKGRINFRHK (72 aa)) is the S1-like domain. Residues 68–87 (NFRHKDANSPRPPRSGQPRR) are disordered. Positions 77-87 (PRPPRSGQPRR) are enriched in pro residues.

It belongs to the IF-1 family. Component of the 30S ribosomal translation pre-initiation complex which assembles on the 30S ribosome in the order IF-2 and IF-3, IF-1 and N-formylmethionyl-tRNA(fMet); mRNA recruitment can occur at any time during PIC assembly.

The protein resides in the cytoplasm. One of the essential components for the initiation of protein synthesis. Stabilizes the binding of IF-2 and IF-3 on the 30S subunit to which N-formylmethionyl-tRNA(fMet) subsequently binds. Helps modulate mRNA selection, yielding the 30S pre-initiation complex (PIC). Upon addition of the 50S ribosomal subunit IF-1, IF-2 and IF-3 are released leaving the mature 70S translation initiation complex. In Burkholderia cenocepacia (strain HI2424), this protein is Translation initiation factor IF-1 2.